A 143-amino-acid chain; its full sequence is Transcription antitermination protein NusB (143 aa).

This sequence belongs to the NusB family.

Functionally, involved in transcription antitermination. Required for transcription of ribosomal RNA (rRNA) genes. Binds specifically to the boxA antiterminator sequence of the ribosomal RNA (rrn) operons. The sequence is that of Transcription antitermination protein NusB from Dehalococcoides mccartyi (strain CBDB1).